A 1018-amino-acid polypeptide reads, in one-letter code: UPF0182 protein Francci3_3781 (1018 aa).

The next 7 helical transmembrane spans lie at 13–33 (TKVL…IAIF), 60–80 (ILLF…NIVL), 109–129 (MLLI…LSAA), 167–187 (FLLG…LLTH), 208–228 (AHIS…YYLD), 250–270 (AVLP…VLFI), and 283–303 (LGAG…PAIV). 2 stretches are compositionally biased toward low complexity: residues 886–896 (TTDAGQDGTPA) and 960–980 (SSPA…SVPA). Disordered stretches follow at residues 886–920 (TTDA…AVGD) and 960–1018 (SSPA…PAPG). The segment covering 981 to 995 (SPVPASPAAKPPAPS) has biased composition (pro residues).

It belongs to the UPF0182 family.

It is found in the cell membrane. This is UPF0182 protein Francci3_3781 from Frankia casuarinae (strain DSM 45818 / CECT 9043 / HFP020203 / CcI3).